A 203-amino-acid chain; its full sequence is Meiotically up-regulated protein PB17E12.09 (203 aa).

Residues 92 to 177 are a coiled coil; it reads CNRKIEGYIK…KEMQLYMTKI (86 aa).

The protein resides in the cytoplasm. In terms of biological role, has a role in meiosis and sporulation. This chain is Meiotically up-regulated protein PB17E12.09, found in Schizosaccharomyces pombe (strain 972 / ATCC 24843) (Fission yeast).